We begin with the raw amino-acid sequence, 182 residues long: Gamma-crystallin N (182 aa).

Beta/gamma crystallin 'Greek key' domains follow at residues glycine 6 to serine 46, glycine 47 to glycine 89, and phenylalanine 95 to glycine 136. The tract at residues leucine 153 to leucine 182 is disordered. The segment covering lysine 169 to leucine 182 has biased composition (polar residues).

The protein belongs to the beta/gamma-crystallin family. Monomer. As to expression, not specifically expressed in eye.

The chain is Gamma-crystallin N from Homo sapiens (Human).